The primary structure comprises 305 residues: tRNA-splicing endonuclease (305 aa).

Active-site residues include Tyr-246, His-257, and Lys-287.

It belongs to the tRNA-intron endonuclease family. Archaeal long subfamily. In terms of assembly, homodimer.

It catalyses the reaction pretRNA = a 3'-half-tRNA molecule with a 5'-OH end + a 5'-half-tRNA molecule with a 2',3'-cyclic phosphate end + an intron with a 2',3'-cyclic phosphate and a 5'-hydroxyl terminus.. Its function is as follows. Endonuclease that removes tRNA introns. Cleaves pre-tRNA at the 5'- and 3'-splice sites to release the intron. The products are an intron and two tRNA half-molecules bearing 2',3' cyclic phosphate and 5'-OH termini. Recognizes a pseudosymmetric substrate in which 2 bulged loops of 3 bases are separated by a stem of 4 bp. This Archaeoglobus fulgidus (strain ATCC 49558 / DSM 4304 / JCM 9628 / NBRC 100126 / VC-16) protein is tRNA-splicing endonuclease.